Consider the following 529-residue polypeptide: Peptide chain release factor 3 (529 aa).

Residues 11–280 (NKRRTFAIIS…GLTKWAPTPL (270 aa)) enclose the tr-type G domain. GTP-binding positions include 20-27 (SHPDAGKT), 88-92 (DTPGH), and 142-145 (NKCD).

This sequence belongs to the TRAFAC class translation factor GTPase superfamily. Classic translation factor GTPase family. PrfC subfamily.

Its subcellular location is the cytoplasm. Its function is as follows. Increases the formation of ribosomal termination complexes and stimulates activities of RF-1 and RF-2. It binds guanine nucleotides and has strong preference for UGA stop codons. It may interact directly with the ribosome. The stimulation of RF-1 and RF-2 is significantly reduced by GTP and GDP, but not by GMP. This Pseudoalteromonas translucida (strain TAC 125) protein is Peptide chain release factor 3.